The primary structure comprises 560 residues: MRLLSLAPDRPRRGGPRHLTSGSPALPPPPPLLLLLLLLGGCLGVSGAAKSSRRPNVVLLLADDQDEVLGGMTPLKKTKALIGEMGMTFSSAYVPSALCCPSRASILTGKYPHNLHVVNNTLEGNCSSKSWQKIQEPNTFPAILRSMCGYQTFFAGKYLNEYGAPDAGGLGHVPLGWSYWYALEKNSKYYNYTLSINGKARKHGENYSVDYLTDVLANVSLDFLDYKSNSEPFFMMISTPAPHSPWTAAPQYQNAFQNVFAPRNKNFNIHGTNKHWLIRQAKTPMTNSSIQFLDNAFRKRWQTLLSVDDLVEKLVKRLEFNGELNNTYIFYTSDNGYHTGQFSLPIDKRQLYEFDIKVPLLVRGPGIKPNQTSKMLVANIDLGPTILDIAGYSLNKTQMDGMSFLPILKGASNLTWRSDVLVEYQGEGRNVTDPTCPSLSPGVSQCFPDCVCEDAYNNTYACVRTMSERWNLQYCEFDDQEVFVEVYNLTADPHQLNNIAKSIDPELLGKMNYRLMMLQSCSGPTCRTPGVFDPGYRFDPRLMFSNHGSVRTRRFSKHLL.

The tract at residues 1-25 (MRLLSLAPDRPRRGGPRHLTSGSPA) is disordered. An N-terminal signal peptide occupies residues 1 to 48 (MRLLSLAPDRPRRGGPRHLTSGSPALPPPPPLLLLLLLLGGCLGVSGA). The Ca(2+) site is built by Asp63, Asp64, and Cys99. Cys99 functions as the Nucleophile in the catalytic mechanism. Position 99 is a 3-oxoalanine (Cys) (Cys99). 7 N-linked (GlcNAc...) asparagine glycosylation sites follow: Asn119, Asn125, Asn191, Asn206, Asn218, Asn287, and Asn325. Ca(2+) contacts are provided by Asp334 and Asn335. N-linked (GlcNAc...) asparagine glycosylation is found at Asn370, Asn395, Asn413, Asn430, Asn457, and Asn488. Position 549 is a phosphoserine (Ser549).

This sequence belongs to the sulfatase family. Requires Ca(2+) as cofactor. The conversion to 3-oxoalanine (also known as C-formylglycine, FGly), of a serine or cysteine residue in prokaryotes and of a cysteine residue in eukaryotes, is critical for catalytic activity.

It localises to the lysosome. The enzyme catalyses Hydrolysis of the 6-sulfate groups of the N-acetyl-D-glucosamine 6-sulfate units of heparan sulfate and keratan sulfate.. Its function is as follows. Hydrolyzes 6-sulfate groups in N-acetyl-d-glucosaminide units of heparin sulfate and keratan sulfate. In Bos taurus (Bovine), this protein is N-acetylglucosamine-6-sulfatase (GNS).